The primary structure comprises 289 residues: MDLSKFNEQQKQILNRIENLANFDCEFSLSDSVNVKFKNLDQAKKDEIYNLALSLKPWRKGPFLLDDIYIDSEWQSFIKFNILAPHLNLAGKCVADVGCNNGYYMFKMLSYDPKSITGFDPSVHTYLQFKFLNKFIRSNINYQLLGVESLPEYAAKFDTIFCLGVIYHRSDPIKMLKELKTALNTGGELFLDTMYIDMDGDFALSPKDRYSKIPNIYFVPTLSALQNWCERAKFKDFTLLETKATDLNEQRKTQWIDGESLSNFLDPADNTKTIEGYPAPKRAYVRVKI.

Carboxy-S-adenosyl-L-methionine-binding positions include Lys-60, Trp-74, Lys-79, Gly-98, 120-122, 147-148, Tyr-167, and Arg-282; these read DPS and VE.

It belongs to the class I-like SAM-binding methyltransferase superfamily. CmoB family. In terms of assembly, homotetramer.

The enzyme catalyses carboxy-S-adenosyl-L-methionine + 5-hydroxyuridine(34) in tRNA = 5-carboxymethoxyuridine(34) in tRNA + S-adenosyl-L-homocysteine + H(+). Catalyzes carboxymethyl transfer from carboxy-S-adenosyl-L-methionine (Cx-SAM) to 5-hydroxyuridine (ho5U) to form 5-carboxymethoxyuridine (cmo5U) at position 34 in tRNAs. This chain is tRNA U34 carboxymethyltransferase, found in Campylobacter concisus (strain 13826).